The chain runs to 24 residues: Brevinin-1E (24 aa).

Cysteine 18 and cysteine 24 are joined by a disulfide.

As to expression, expressed by the skin glands.

Its subcellular location is the secreted. Its function is as follows. Antimicrobial peptide. Stimulates insulin release by BRIN-BD11 cells in vitro. The protein is Brevinin-1E of Pelophylax saharicus (Sahara frog).